Consider the following 342-residue polypeptide: Fatty acid desaturase 6 (342 aa).

The next 2 helical transmembrane spans lie at 39–59 (GVDCAILALSLLALPPGFLCL) and 63–83 (SPLVFALGITILGVCHYTLTV). The Histidine box-1 motif lies at 87–91 (HLATH). Residues 124-128 (HVKMH) carry the Histidine box-2 motif. 2 helical membrane passes run 151–171 (YVYMFLAPLLIPIITPLVAVE) and 185–205 (LGLISLGLYSQYWLLLNVSGF). The short motif at 277-281 (HVEHH) is the Histidine box-3 element.

Belongs to the fatty acid desaturase type 1 family.

The protein resides in the membrane. The protein operates within lipid metabolism; fatty acid metabolism. This chain is Fatty acid desaturase 6 (FADS6), found in Bos taurus (Bovine).